We begin with the raw amino-acid sequence, 131 residues long: Insertion element IS1 protein InsB (131 aa).

It belongs to the transposase 27 family.

Absolutely required for transposition of IS1. The chain is Insertion element IS1 protein InsB (insB1) from Shigella flexneri.